The chain runs to 329 residues: Minor capsid protein A1 (329 aa).

The segment at 143–162 is disordered; it reads GPSPVPGPNPDPPLEPPPGT. Positions 145 to 161 are enriched in pro residues; that stretch reads SPVPGPNPDPPLEPPPG.

Its subcellular location is the virion. Its function is as follows. Minor capsid protein. In Qbeta virus (strain MX1), this protein is Minor capsid protein A1.